Consider the following 157-residue polypeptide: Small ribosomal subunit protein uS7 (157 aa).

Belongs to the universal ribosomal protein uS7 family. Part of the 30S ribosomal subunit. Contacts proteins S9 and S11.

Functionally, one of the primary rRNA binding proteins, it binds directly to 16S rRNA where it nucleates assembly of the head domain of the 30S subunit. Is located at the subunit interface close to the decoding center, probably blocks exit of the E-site tRNA. In Delftia acidovorans (strain DSM 14801 / SPH-1), this protein is Small ribosomal subunit protein uS7.